We begin with the raw amino-acid sequence, 156 residues long: Transcriptional repressor NrdR (156 aa).

Residues 3–34 fold into a zinc finger; that stretch reads CPYCGHLEDRVVDSRETQDGQATRRRRACLSC. The region spanning 49–139 is the ATP-cone domain; the sequence is PQVVKKDGRR…VYRAFRDVGE (91 aa).

Belongs to the NrdR family. Requires Zn(2+) as cofactor.

Functionally, negatively regulates transcription of bacterial ribonucleotide reductase nrd genes and operons by binding to NrdR-boxes. This chain is Transcriptional repressor NrdR, found in Anaeromyxobacter dehalogenans (strain 2CP-C).